The chain runs to 616 residues: Heme A synthase-mitochondrial ferredoxin fusion protein (616 aa).

A mitochondrion-targeting transit peptide spans methionine 1–asparagine 45. The heme a synthase cox15-like stretch occupies residues asparagine 45–histidine 465. The Mitochondrial matrix segment spans residues glutamate 46–lysine 97. A helical transmembrane segment spans residues valine 98–isoleucine 118. Over threonine 119–arginine 182 the chain is Mitochondrial intermembrane. Histidine 181 serves as a coordination point for heme o. Residues valine 183–lysine 203 form a helical membrane-spanning segment. Topologically, residues arginine 204–arginine 212 are mitochondrial matrix. A helical transmembrane segment spans residues leucine 213 to serine 233. The Mitochondrial intermembrane portion of the chain corresponds to glycine 234 to alanine 254. Residues threonine 255–leucine 275 form a helical membrane-spanning segment. A heme o-binding site is contributed by histidine 256. The Mitochondrial matrix portion of the chain corresponds to glutamine 276–serine 311. Residues phenylalanine 312–glycine 332 form a helical membrane-spanning segment. The Mitochondrial intermembrane segment spans residues methionine 333–glutamine 380. Residues leucine 381–serine 401 traverse the membrane as a helical segment. Heme b is bound at residue histidine 383. Residues arginine 402 to asparagine 417 lie on the Mitochondrial matrix side of the membrane. A helical transmembrane segment spans residues valine 418 to valine 438. A topological domain (mitochondrial intermembrane) is located at residue proline 439. A helical membrane pass occupies residues valine 440 to leucine 460. Histidine 446 lines the heme b pocket. At alanine 461 to alanine 616 the chain is on the mitochondrial matrix side. Positions phenylalanine 502–threonine 606 constitute a 2Fe-2S ferredoxin-type domain. Residues glycine 516–alanine 616 are mitochondrial ferredoxin yah1-like. [2Fe-2S] cluster-binding residues include cysteine 541, cysteine 547, cysteine 550, and cysteine 587.

In the N-terminal section; belongs to the COX15/CtaA family. Type 2 subfamily. It in the C-terminal section; belongs to the adrenodoxin/putidaredoxin family. Homodimer. The cofactor is heme b. [2Fe-2S] cluster is required as a cofactor. Post-translationally, the etp1 preprotein is cleaved into 2 chains after imort into mitochondria. The N-terminal chain containing a heme A synthase cox15-like domain etp1(cd) is a subunit of the membrane-embedded cytochrome c oxidase complex and functions in the respiratory chain. The C-terminal chain containing a ferredoxin yah1-like domain etp1(fd) is released and serves in the matrix as electron transfer protein.

Its subcellular location is the mitochondrion inner membrane. The protein localises to the mitochondrion matrix. The catalysed reaction is Fe(II)-heme o + 2 A + H2O = Fe(II)-heme a + 2 AH2. It functions in the pathway porphyrin-containing compound metabolism; heme A biosynthesis; heme A from heme O: step 1/1. Catalyzes the second reaction in the biosynthesis of heme A, a prosthetic group of mitochondrial cytochrome c oxidase (CcO). Heme A is synthesized from heme B by two sequential enzymatic reactions catalyzed by heme O synthase (HOS) and heme A synthase (HAS). HAS catalyzes the conversion of heme O to heme A by two successive hydroxylations of the methyl group at C8, in a reaction that involves matrix ferredoxin and ferredoxin reductase. The first hydroxylation forms heme I, the second hydroxylation results in an unstable dihydroxymethyl group, which spontaneously dehydrates, resulting in the formyl group of heme A. In terms of biological role, iron-sulfur protein that transfers electrons in a wide variety of metabolic reactions. Involved in heme A biosynthesis and in iron-sulfur cluster assembly. Transfers electrons from adrenodoxin reductase arh1 to heme A synthase etp1(cd), a heme protein that catalyzes the conversion of heme O to heme A. Required for the de novo synthesis of Fe-S clusters on iron sulfur cluster assembly protein isu1. Interact in its reduced state with isu1 to productively deliver electrons for Fe-S cluster synthesis. Essential for coenzyme Q biosynthesis. May transfer the electrons required for the hydroxylation reaction performed by coq6. This is Heme A synthase-mitochondrial ferredoxin fusion protein from Schizosaccharomyces pombe (strain 972 / ATCC 24843) (Fission yeast).